A 239-amino-acid chain; its full sequence is uncharacterized protein (239 aa).

7 helical membrane-spanning segments follow: residues 20–40, 48–68, 80–100, 106–126, 143–163, 164–184, and 192–212; these read ILIW…WLVL, FSSV…LGLL, WILL…GFHF, IYAM…TYLF, LILL…EILV, MIAG…DILH, and IPGA…VLYF.

It belongs to the cytomegalovirus US12 family.

The protein localises to the membrane. This is an uncharacterized protein from Homo sapiens (Human).